The sequence spans 476 residues: MRLLILCASIILVPLLCDARIIKRYVIGCPERCDKSLCPPIPPDCLAGDILDQCDCCPVCAAGEGESCGGTGKLGDPECGEGLECAVSDGVGATTTVRRRGKTGVCVCKSSEPVCGSDGVSYRNICELKRVSNRAQKLQQPPIIFIQRGACGKGHEENPDSLRHRYNFIADVVEKIAPAVVHIELFRKNVFNREVAVASGSGFVVSEDGLIVTNAHVVANKHRVKVELKTGTTYDAKIKDVDEKADIALIKIDAPMKLPVLLLGRSADLRPGEFVVAIGSPFSLQNTVTTGIVSTTQRGGKELGLRNSDMDYIQTDAIINYGNSGGPLVNLDGEVIGINTLKVTAGISFAIPSDKIRQFLAESHDRQAKGKTATKKKYIGVRMMTLTPTLAKELKQRKNDFPDVTSGAYVIEVIPKTPAEVGGLKESDVIISINGQRITSASDVSTAIKTDESLRAVVRRGNEDIILTIIPEEIDP.

The first 19 residues, 1–19 (MRLLILCASIILVPLLCDA), serve as a signal peptide directing secretion. Positions 25 to 109 (YVIGCPERCD…RGKTGVCVCK (85 aa)) constitute an IGFBP N-terminal domain. 6 disulfides stabilise this stretch: cysteine 29–cysteine 54, cysteine 33–cysteine 56, cysteine 38–cysteine 57, cysteine 45–cysteine 60, cysteine 68–cysteine 85, and cysteine 79–cysteine 106. One can recognise a Kazal-like domain in the interval 94-153 (TTTVRRRGKTGVCVCKSSEPVCGSDGVSYRNICELKRVSNRAQKLQQPPIIFIQRGACGK). The interval 200 to 360 (GSGFVVSEDG…IPSDKIRQFL (161 aa)) is serine protease. Residues histidine 216, aspartate 246, and serine 324 each act as charge relay system in the active site. Positions 361–463 (AESHDRQAKG…LRAVVRRGNE (103 aa)) constitute a PDZ domain.

It belongs to the peptidase S1C family. As to quaternary structure, forms homotrimers. In the presence of substrate, may form higher-order multimers in a PDZ-independent manner.

The protein resides in the secreted. It is found in the cytoplasm. Its subcellular location is the cytosol. Its function is as follows. Serine protease with a variety of targets, including extracellular matrix proteins and proteoglycans. Through cleavage of proteoglycans, may release soluble FGF-glycosaminoglycan complexes that promote the range and intensity of FGF signals in the extracellular space. Regulates the availability of insulin-like growth factors (IGFs) by cleaving IGF-binding proteins. Inhibits signaling mediated by TGF-beta family members. Consequently, may regulate many physiological processes. Intracellularly, degrades TSC2, leading to the activation of TSC2 downstream targets. This Danio rerio (Zebrafish) protein is Serine protease HTRA1B (htra1b).